The primary structure comprises 194 residues: Potassium-transporting ATPase KdpC subunit (194 aa).

Residues leucine 12–phenylalanine 34 form a helical membrane-spanning segment.

The protein belongs to the KdpC family. As to quaternary structure, the system is composed of three essential subunits: KdpA, KdpB and KdpC.

It is found in the cell inner membrane. Its function is as follows. Part of the high-affinity ATP-driven potassium transport (or Kdp) system, which catalyzes the hydrolysis of ATP coupled with the electrogenic transport of potassium into the cytoplasm. This subunit acts as a catalytic chaperone that increases the ATP-binding affinity of the ATP-hydrolyzing subunit KdpB by the formation of a transient KdpB/KdpC/ATP ternary complex. The protein is Potassium-transporting ATPase KdpC subunit of Salmonella choleraesuis (strain SC-B67).